The primary structure comprises 225 residues: MDDLETLDFRELERELANALAADQKYSRENDAKFRAIHQKVASYEEFRDIVLASNLKPLERKDKVGGESKQPWNPSFNTTNCTQKSEDVMLKKSLSDPTNAFEFARDWRRLGNVEKYDFLLQLGAEKLSQLFHAEVCSGLLGEFLLVLSESFQAIHVEKVLKILQTLAETKRFDLNLIFISRSEVESSQKLFGKLQTCVGAMKDEKRGLGDENLRKLMACYKISC.

The stretch at 8-32 (DFRELERELANALAADQKYSRENDA) forms a coiled coil.

Belongs to the DNAAF19/PR46b family. Homodimer.

The protein localises to the cytoplasm. It is found in the cell projection. It localises to the cilium. The protein resides in the flagellum. In terms of biological role, dynein-attachment factor required for cilia motility. The protein is Dynein axonemal assembly factor 19 (dnaaf19) of Xenopus tropicalis (Western clawed frog).